Reading from the N-terminus, the 885-residue chain is DNA mismatch repair protein MutS (885 aa).

626–633 (GPNMGGKS) provides a ligand contact to ATP.

This sequence belongs to the DNA mismatch repair MutS family.

Its function is as follows. This protein is involved in the repair of mismatches in DNA. It is possible that it carries out the mismatch recognition step. This protein has a weak ATPase activity. This is DNA mismatch repair protein MutS from Burkholderia lata (strain ATCC 17760 / DSM 23089 / LMG 22485 / NCIMB 9086 / R18194 / 383).